Here is a 338-residue protein sequence, read N- to C-terminus: P2Y purinoceptor 14 (338 aa).

Over methionine 1–tyrosine 29 the chain is Extracellular. N-linked (GlcNAc...) asparagine glycans are attached at residues asparagine 2 and asparagine 3. Residues glycine 30–valine 50 form a helical membrane-spanning segment. Residues proline 51–serine 55 lie on the Cytoplasmic side of the membrane. Residues phenylalanine 56–phenylalanine 76 traverse the membrane as a helical segment. The Extracellular portion of the chain corresponds to lysine 77–valine 96. A disulfide bond links cysteine 94 and cysteine 172. The helical transmembrane segment at serine 97 to phenylalanine 117 threads the bilayer. At aspartate 118–lysine 139 the chain is on the cytoplasmic side. A helical transmembrane segment spans residues leucine 140–threonine 160. At asparagine 161–asparagine 188 the chain is on the extracellular side. The chain crosses the membrane as a helical span at residues tyrosine 189 to isoleucine 209. The Cytoplasmic segment spans residues threonine 210–asparagine 234. Residues isoleucine 235–proline 255 traverse the membrane as a helical segment. The Extracellular portion of the chain corresponds to tyrosine 256–glutamate 278. The chain crosses the membrane as a helical span at residues phenylalanine 279–cysteine 299. Topologically, residues glutamine 300–leucine 338 are cytoplasmic.

This sequence belongs to the G-protein coupled receptor 1 family.

Its subcellular location is the cell membrane. Functionally, receptor for UDP-glucose coupled to G-proteins. The polypeptide is P2Y purinoceptor 14 (P2ry14) (Mus musculus (Mouse)).